A 153-amino-acid chain; its full sequence is Acylphosphatase-like protein MJ0553 (153 aa).

The region spanning 4–102 (TYELIIYGRV…SRLSSDDILE (99 aa)) is the Acylphosphatase-like domain.

The protein is Acylphosphatase-like protein MJ0553 of Methanocaldococcus jannaschii (strain ATCC 43067 / DSM 2661 / JAL-1 / JCM 10045 / NBRC 100440) (Methanococcus jannaschii).